Reading from the N-terminus, the 172-residue chain is Translation initiation factor IF-3 (172 aa).

Belongs to the IF-3 family. As to quaternary structure, monomer.

Its subcellular location is the cytoplasm. IF-3 binds to the 30S ribosomal subunit and shifts the equilibrium between 70S ribosomes and their 50S and 30S subunits in favor of the free subunits, thus enhancing the availability of 30S subunits on which protein synthesis initiation begins. This chain is Translation initiation factor IF-3, found in Geobacter sulfurreducens (strain ATCC 51573 / DSM 12127 / PCA).